Consider the following 123-residue polypeptide: Glycophorin-B (123 aa).

The signal sequence occupies residues 1 to 19; that stretch reads MYGKIIFVLLLSEIVSISA. A helical transmembrane segment spans residues 93 to 113; sequence VVIILIILCVMAGVIGTILLI.

Belongs to the glycophorin-A family. As to quaternary structure, component of the ankyrin-1 complex in the erythrocyte, composed of ANK1, RHCE, RHAG, SLC4A1, EPB42, GYPA, GYPB and AQP1. Interacts (via the N-terminal) with RHAG; this interaction bridges the (RHAG)2(RHCE) heterotrimer with the SLC4A1 Band 3 I dimer complexed with GYPA. The N-terminal extracellular domain is heavily glycosylated on serine and threonine residues.

It is found in the cell membrane. Component of the ankyrin-1 complex, a multiprotein complex involved in the stability and shape of the erythrocyte membrane. The sequence is that of Glycophorin-B from Pan troglodytes (Chimpanzee).